A 386-amino-acid polypeptide reads, in one-letter code: Mannitol-1-phosphate 5-dehydrogenase (386 aa).

4-15 (AIHFGGGNIGRG) serves as a coordination point for NAD(+). The active site involves K211.

This sequence belongs to the mannitol dehydrogenase family. In terms of assembly, monomer.

The enzyme catalyses D-mannitol 1-phosphate + NAD(+) = beta-D-fructose 6-phosphate + NADH + H(+). In terms of biological role, catalyzes the NAD(H)-dependent interconversion of D-fructose 6-phosphate and D-mannitol 1-phosphate in the mannitol metabolic pathway. The protein is Mannitol-1-phosphate 5-dehydrogenase (mpdA) of Emericella nidulans (strain FGSC A4 / ATCC 38163 / CBS 112.46 / NRRL 194 / M139) (Aspergillus nidulans).